A 70-amino-acid polypeptide reads, in one-letter code: Protein SlyX homolog (70 aa).

Belongs to the SlyX family.

The sequence is that of Protein SlyX homolog from Shewanella baltica (strain OS155 / ATCC BAA-1091).